A 217-amino-acid polypeptide reads, in one-letter code: uncharacterized protein (217 aa).

A run of 6 helical transmembrane segments spans residues Ile-13–Leu-35, Phe-50–Leu-68, Phe-75–Ile-94, Met-109–Leu-131, Tyr-152–Val-174, and Gly-194–Leu-216.

It is found in the cell membrane. This is an uncharacterized protein from Archaeoglobus fulgidus (strain ATCC 49558 / DSM 4304 / JCM 9628 / NBRC 100126 / VC-16).